The sequence spans 156 residues: S-ribosylhomocysteine lyase (156 aa).

Residues histidine 56, histidine 60, and cysteine 123 each contribute to the Fe cation site.

The protein belongs to the LuxS family. Homodimer. Requires Fe cation as cofactor.

The enzyme catalyses S-(5-deoxy-D-ribos-5-yl)-L-homocysteine = (S)-4,5-dihydroxypentane-2,3-dione + L-homocysteine. Involved in the synthesis of autoinducer 2 (AI-2) which is secreted by bacteria and is used to communicate both the cell density and the metabolic potential of the environment. The regulation of gene expression in response to changes in cell density is called quorum sensing. Catalyzes the transformation of S-ribosylhomocysteine (RHC) to homocysteine (HC) and 4,5-dihydroxy-2,3-pentadione (DPD). The chain is S-ribosylhomocysteine lyase from Staphylococcus aureus (strain Mu3 / ATCC 700698).